We begin with the raw amino-acid sequence, 309 residues long: Ribosomal protein L11 methyltransferase (309 aa).

4 residues coordinate S-adenosyl-L-methionine: Thr144, Gly165, Asp187, and Asn235.

Belongs to the methyltransferase superfamily. PrmA family.

It is found in the cytoplasm. The enzyme catalyses L-lysyl-[protein] + 3 S-adenosyl-L-methionine = N(6),N(6),N(6)-trimethyl-L-lysyl-[protein] + 3 S-adenosyl-L-homocysteine + 3 H(+). Functionally, methylates ribosomal protein L11. This Prochlorococcus marinus (strain MIT 9215) protein is Ribosomal protein L11 methyltransferase.